The chain runs to 1212 residues: uncharacterized protein (1212 aa).

Positions 783-802 are disordered; that stretch reads TRQDASGGSSSGTKKGEKLQ.

This is an uncharacterized protein from Human herpesvirus 6B (strain Z29) (HHV-6 variant B).